Reading from the N-terminus, the 260-residue chain is ATP synthase subunit a (260 aa).

Residues 1–11 (MQNTLLRTYIN) constitute a propeptide, removed in mature form. The next 6 helical transmembrane spans lie at 37-57 (ITTF…LYVL), 96-116 (YFPF…ISMI), 126-146 (FVFI…LSLF), 152-172 (FFSL…LVVI), 192-212 (IFSG…FVQI), and 217-237 (LILG…EFGI).

Belongs to the ATPase A chain family. F-type ATPases have 2 components, CF(1) - the catalytic core - and CF(0) - the membrane proton channel. CF(1) has five subunits: alpha(3), beta(3), gamma(1), delta(1), epsilon(1). CF(0) has three main subunits: a, b and c.

The protein resides in the mitochondrion inner membrane. Mitochondrial membrane ATP synthase (F(1)F(0) ATP synthase or Complex V) produces ATP from ADP in the presence of a proton gradient across the membrane which is generated by electron transport complexes of the respiratory chain. F-type ATPases consist of two structural domains, F(1) - containing the extramembraneous catalytic core and F(0) - containing the membrane proton channel, linked together by a central stalk and a peripheral stalk. During catalysis, ATP synthesis in the catalytic domain of F(1) is coupled via a rotary mechanism of the central stalk subunits to proton translocation. Key component of the proton channel; it may play a direct role in the translocation of protons across the membrane. The polypeptide is ATP synthase subunit a (ATP6) (Candida glabrata (strain ATCC 2001 / BCRC 20586 / JCM 3761 / NBRC 0622 / NRRL Y-65 / CBS 138) (Yeast)).